The primary structure comprises 180 residues: Oligoribonuclease (180 aa).

The Exonuclease domain maps to 7 to 170 (LIWIDLEMTG…DDIRESIAEL (164 aa)). Y128 is an active-site residue.

It belongs to the oligoribonuclease family.

It localises to the cytoplasm. Functionally, 3'-to-5' exoribonuclease specific for small oligoribonucleotides. This Pseudomonas paraeruginosa (strain DSM 24068 / PA7) (Pseudomonas aeruginosa (strain PA7)) protein is Oligoribonuclease.